A 504-amino-acid chain; its full sequence is Maturase K (504 aa).

It belongs to the intron maturase 2 family. MatK subfamily.

It is found in the plastid. The protein localises to the chloroplast. Functionally, usually encoded in the trnK tRNA gene intron. Probably assists in splicing its own and other chloroplast group II introns. This Hamamelis mollis (Chinese witch hazel) protein is Maturase K.